A 250-amino-acid chain; its full sequence is MALKQWMLANIADNKGSLLTPDEQARVFCLSADWIRFLSLPDHDTVLLRDTVAAVEGARQLEMVYPAPEHVHRWSYLCPPEQVRVVIVGQDPYCDGSASGLAFGTLAGRPPPPSLNNVFRELARTVDGFQRPASGCLDAWARRGVLLLNTVFTVVHGQPGSHRHLGWQTLSNHVIRRLSERREHLVFMLWGADAHTCEYLIDRRRHLVLKSCHPSPRNTTRAFVGNDHFILANAYLDTHYRETMDWRLCG.

The active-site Proton acceptor is Asp91.

The protein belongs to the uracil-DNA glycosylase (UDG) superfamily. UNG family.

The protein resides in the host nucleus. It carries out the reaction Hydrolyzes single-stranded DNA or mismatched double-stranded DNA and polynucleotides, releasing free uracil.. Its function is as follows. Excises uracil residues from the DNA which can arise as a result of misincorporation of dUMP residues by DNA polymerase or due to deamination of cytosine. Functionally, excises uracil residues from the DNA which can arise as a result of misincorporation of dUMP residues by DNA polymerase or deamination of cytosines. Therefore may reduce deleterious uracil incorporation into the viral genome, particularly in terminally differentiated cells which lack DNA repair enzymes. This chain is Uracil-DNA glycosylase (UL114), found in Homo sapiens (Human).